A 277-amino-acid chain; its full sequence is uncharacterized protein (277 aa).

Transmembrane regions (helical) follow at residues 37 to 59 (YLRYAIIPGLVTGVFSFLLLYIW), 63 to 82 (LIFGLMGSVYGLKVLMPKVI), 214 to 236 (MLCGVIVVFVLAITFSFGFKTYI), and 246 to 268 (WITSGIYMTLMCFFFKSFTTYLF).

It is found in the cell membrane. This is an uncharacterized protein from Bacillus anthracis.